The sequence spans 124 residues: Small ribosomal subunit protein uS12 (124 aa).

A disordered region spans residues 1-24 (MPTISQLVRKGRAKITKKSKSAAL). Basic residues predominate over residues 9–20 (RKGRAKITKKSK). At D89 the chain carries 3-methylthioaspartic acid. A disordered region spans residues 105 to 124 (AGVEGRTQRRSKYGAKRPKK). The span at 112-124 (QRRSKYGAKRPKK) shows a compositional bias: basic residues.

This sequence belongs to the universal ribosomal protein uS12 family. In terms of assembly, part of the 30S ribosomal subunit. Contacts proteins S8 and S17. May interact with IF1 in the 30S initiation complex.

With S4 and S5 plays an important role in translational accuracy. Functionally, interacts with and stabilizes bases of the 16S rRNA that are involved in tRNA selection in the A site and with the mRNA backbone. Located at the interface of the 30S and 50S subunits, it traverses the body of the 30S subunit contacting proteins on the other side and probably holding the rRNA structure together. The combined cluster of proteins S8, S12 and S17 appears to hold together the shoulder and platform of the 30S subunit. The sequence is that of Small ribosomal subunit protein uS12 from Christiangramia forsetii (strain DSM 17595 / CGMCC 1.15422 / KT0803) (Gramella forsetii).